The primary structure comprises 136 residues: Large ribosomal subunit protein uL16 (136 aa).

It belongs to the universal ribosomal protein uL16 family. Part of the 50S ribosomal subunit.

Its function is as follows. Binds 23S rRNA and is also seen to make contacts with the A and possibly P site tRNAs. This Glaesserella parasuis serovar 5 (strain SH0165) (Haemophilus parasuis) protein is Large ribosomal subunit protein uL16.